Reading from the N-terminus, the 285-residue chain is Vacuolar protein sorting-associated protein 37B (285 aa).

The segment at 50-170 (ASNRSLAEGN…EMVLKGQRLP (121 aa)) is interaction with IST1. The VPS37 C-terminal domain maps to 84 to 173 (FEAYQIKKTK…LKGQRLPQAL (90 aa)). The tract at residues 175–201 (PLPPRLPELAPTAPLPYPAPEASGPPA) is disordered. Arg218 is subject to Omega-N-methylarginine. A disordered region spans residues 230–285 (GQAVPYPGLQCPPLPPRVGLPTQQGFSSQFVSPYPPPLPQRPPPRLPPHQPGFILQ). The span at 250-260 (PTQQGFSSQFV) shows a compositional bias: polar residues. A compositionally biased stretch (pro residues) spans 262 to 279 (PYPPPLPQRPPPRLPPHQ).

This sequence belongs to the VPS37 family. In terms of assembly, component of the ESCRT-I complex (endosomal sorting complex required for transport I) which consists of TSG101, VPS28, a VPS37 protein (VPS37A to -D) and MVB12A or MVB12B in a 1:1:1:1 stoichiometry. Interacts with TSG101, VPS28, MVB12A and MVB12B. Component of the ESCRT-I complex (endosomal sorting complex required for transport I) which consists of TSG101, VPS28, a VPS37 protein (VPS37A to -D) and UBAP1 in a 1:1:1:1 stoichiometry. Interacts with CEP55. Interacts with IST1. Widely expressed. Expressed in macrophages and lymphocytes.

It localises to the late endosome membrane. Its function is as follows. Component of the ESCRT-I complex, a regulator of vesicular trafficking process. Required for the sorting of endocytic ubiquitinated cargos into multivesicular bodies. May be involved in cell growth and differentiation. This Homo sapiens (Human) protein is Vacuolar protein sorting-associated protein 37B (VPS37B).